The sequence spans 422 residues: GPI mannosyltransferase 1 (422 aa).

The next 8 membrane-spanning stretches (helical) occupy residues 10–30 (TTPLFTISLLLRLGLLFYGIY), 82–102 (FPAFGKLVFAAADLLAGWLIL), 162–182 (IILGLSVHFKIYPFIYAPAIV), 216–236 (LKFGLLSLITFMILNLVMFAI), 282–302 (IESFAFLPQLLLSCVLIPLAL), 327–347 (SQYFLWYMIFLPLYLPNSSFL), 352–372 (LGIFALLLWIVSQAAWLQQGY), and 385–405 (GLWLASIAFFLVNCWILGVII).

The protein belongs to the PIGM family.

Its subcellular location is the endoplasmic reticulum membrane. It functions in the pathway glycolipid biosynthesis; glycosylphosphatidylinositol-anchor biosynthesis. Mannosyltransferase involved in glycosylphosphatidylinositol-anchor biosynthesis. Transfers the first alpha-1,4-mannose to GlcN-acyl-PI during GPI precursor assembly. Required for cell wall integrity. The chain is GPI mannosyltransferase 1 (GPI14) from Gibberella zeae (strain ATCC MYA-4620 / CBS 123657 / FGSC 9075 / NRRL 31084 / PH-1) (Wheat head blight fungus).